The sequence spans 272 residues: Putative phosphatase HI_0597 (272 aa).

Residue aspartate 11 is the Nucleophile of the active site. Mg(2+) is bound at residue aspartate 11. Leucine 12 provides a ligand contact to phosphate. Aspartate 13 provides a ligand contact to Mg(2+). Residues 45–46 (TG) and lysine 195 contribute to the phosphate site. Aspartate 218 is a binding site for Mg(2+). Residue asparagine 221 coordinates phosphate.

Belongs to the HAD-like hydrolase superfamily. Cof family. Mg(2+) is required as a cofactor.

The protein is Putative phosphatase HI_0597 of Haemophilus influenzae (strain ATCC 51907 / DSM 11121 / KW20 / Rd).